A 94-amino-acid polypeptide reads, in one-letter code: Small ribosomal subunit protein bS18 (94 aa).

The protein belongs to the bacterial ribosomal protein bS18 family. In terms of assembly, part of the 30S ribosomal subunit. Forms a tight heterodimer with protein bS6.

Binds as a heterodimer with protein bS6 to the central domain of the 16S rRNA, where it helps stabilize the platform of the 30S subunit. This Polaromonas naphthalenivorans (strain CJ2) protein is Small ribosomal subunit protein bS18.